The following is a 468-amino-acid chain: RUS family member 1 (468 aa).

A2 is subject to N-acetylalanine. Residue T49 is modified to Phosphothreonine. The chain crosses the membrane as a helical span at residues 247 to 267 (LLMLPLVSGCPGFSLGCFFFL).

This sequence belongs to the RUS1 family.

The protein resides in the membrane. The protein is RUS family member 1 (Rusf1) of Pongo abelii (Sumatran orangutan).